The sequence spans 172 residues: Peptide methionine sulfoxide reductase MsrA (172 aa).

Residue cysteine 12 is part of the active site.

The protein belongs to the MsrA Met sulfoxide reductase family.

The catalysed reaction is L-methionyl-[protein] + [thioredoxin]-disulfide + H2O = L-methionyl-(S)-S-oxide-[protein] + [thioredoxin]-dithiol. It catalyses the reaction [thioredoxin]-disulfide + L-methionine + H2O = L-methionine (S)-S-oxide + [thioredoxin]-dithiol. Functionally, has an important function as a repair enzyme for proteins that have been inactivated by oxidation. Catalyzes the reversible oxidation-reduction of methionine sulfoxide in proteins to methionine. The protein is Peptide methionine sulfoxide reductase MsrA of Ligilactobacillus salivarius (strain UCC118) (Lactobacillus salivarius).